Here is a 561-residue protein sequence, read N- to C-terminus: Zinc finger protein 37A (561 aa).

In terms of domain architecture, KRAB spans 8–79; that stretch reads VSFRDVTVGF…EEKFPSQSHL (72 aa). The C2H2-type 1; degenerate zinc finger occupies 146–168; the sequence is FEYNECGKAFPENSLFLVHKRGY. Residues 243-265 form a C2H2-type 2; degenerate zinc finger; that stretch reads IEYNECGTFFSEKLVLHLQQRTH. 10 consecutive C2H2-type zinc fingers follow at residues 271-293, 299-321, 327-349, 355-377, 383-405, 411-433, 439-461, 467-489, 495-517, and 523-545; these read YECH…QRTH, YECH…QRIH, YGCH…QRTH, YECH…QKTH, YECY…QRIH, YECN…LRTH, YECI…LRRH, FGCN…QRTH, YGCN…HRTH, and YECN…QRIH.

Belongs to the krueppel C2H2-type zinc-finger protein family.

The protein localises to the nucleus. May be involved in transcriptional regulation. The sequence is that of Zinc finger protein 37A (ZNF37A) from Homo sapiens (Human).